The following is a 337-amino-acid chain: Major outer membrane protein P.IB (337 aa).

Positions 1-19 (MKKSLIALTLAALPVAAMA) are cleaved as a signal peptide.

This sequence belongs to the Gram-negative porin family. As to quaternary structure, homotrimer.

Its subcellular location is the cell outer membrane. Its function is as follows. Serves as a slightly cation selective porin. In Neisseria lactamica, this protein is Major outer membrane protein P.IB (por).